Reading from the N-terminus, the 668-residue chain is Macrolide export ATP-binding/permease protein MacB 1/2 (668 aa).

The region spanning 9-247 (IRLRGVGREY…PGPGPAQAPQ (239 aa)) is the ABC transporter domain. Residue 45–52 (GASGSGKS) coordinates ATP. Residues 230-257 (RTGAPAADPGPGPAQAPQPAPQPAPVQA) form a disordered region. Residues 237–255 (DPGPGPAQAPQPAPQPAPV) are compositionally biased toward pro residues. 4 helical membrane passes run 294–314 (FLTM…VALG), 541–561 (LALL…IGVM), 598–618 (LVCV…GLAF), and 634–654 (MLAA…LPAV).

This sequence belongs to the ABC transporter superfamily. Macrolide exporter (TC 3.A.1.122) family. Homodimer.

The protein resides in the cell inner membrane. Functionally, non-canonical ABC transporter that contains transmembrane domains (TMD), which form a pore in the inner membrane, and an ATP-binding domain (NBD), which is responsible for energy generation. Confers resistance against macrolides. The chain is Macrolide export ATP-binding/permease protein MacB 1/2 from Paracoccus denitrificans (strain Pd 1222).